The primary structure comprises 335 residues: Cytoskeleton protein RodZ (335 aa).

At Met-1 to Gly-111 the chain is on the cytoplasmic side. The region spanning Leu-19–Leu-71 is the HTH cro/C1-type domain. The H-T-H motif DNA-binding region spans Gln-30–Glu-49. A helical; Signal-anchor for type II membrane protein membrane pass occupies residues Trp-112–Trp-132. Topologically, residues Trp-133 to Gln-335 are periplasmic. Polar residues predominate over residues Asp-148 to Leu-164. A disordered region spans residues Asp-148 to Thr-244. 2 stretches are compositionally biased toward low complexity: residues Asp-165–Gln-205 and Asp-217–Asp-239.

Belongs to the RodZ family.

Its subcellular location is the cell inner membrane. Its function is as follows. Cytoskeletal protein that is involved in cell-shape control through regulation of the length of the long axis. The protein is Cytoskeleton protein RodZ of Escherichia coli O81 (strain ED1a).